A 331-amino-acid chain; its full sequence is Ketol-acid reductoisomerase (NADP(+)) (331 aa).

The region spanning 2 to 182 (ARMYYDSDAN…GGTRAGILET (181 aa)) is the KARI N-terminal Rossmann domain. Residues 25 to 28 (YGSQ), Ser-51, Ser-53, and 83 to 86 (DEVQ) each bind NADP(+). His-108 is an active-site residue. Gly-134 is a binding site for NADP(+). In terms of domain architecture, KARI C-terminal knotted spans 183–328 (TFREETETDL…KDLRAMFSWL (146 aa)). Mg(2+)-binding residues include Asp-191, Glu-195, Glu-227, and Glu-231. Ser-252 contributes to the substrate binding site.

This sequence belongs to the ketol-acid reductoisomerase family. It depends on Mg(2+) as a cofactor.

The catalysed reaction is (2R)-2,3-dihydroxy-3-methylbutanoate + NADP(+) = (2S)-2-acetolactate + NADPH + H(+). It carries out the reaction (2R,3R)-2,3-dihydroxy-3-methylpentanoate + NADP(+) = (S)-2-ethyl-2-hydroxy-3-oxobutanoate + NADPH + H(+). The protein operates within amino-acid biosynthesis; L-isoleucine biosynthesis; L-isoleucine from 2-oxobutanoate: step 2/4. It functions in the pathway amino-acid biosynthesis; L-valine biosynthesis; L-valine from pyruvate: step 2/4. Involved in the biosynthesis of branched-chain amino acids (BCAA). Catalyzes an alkyl-migration followed by a ketol-acid reduction of (S)-2-acetolactate (S2AL) to yield (R)-2,3-dihydroxy-isovalerate. In the isomerase reaction, S2AL is rearranged via a Mg-dependent methyl migration to produce 3-hydroxy-3-methyl-2-ketobutyrate (HMKB). In the reductase reaction, this 2-ketoacid undergoes a metal-dependent reduction by NADPH to yield (R)-2,3-dihydroxy-isovalerate. In Trichodesmium erythraeum (strain IMS101), this protein is Ketol-acid reductoisomerase (NADP(+)).